Here is a 355-residue protein sequence, read N- to C-terminus: Peptide chain release factor 1 (355 aa).

Q230 carries the post-translational modification N5-methylglutamine.

Belongs to the prokaryotic/mitochondrial release factor family. Methylated by PrmC. Methylation increases the termination efficiency of RF1.

Its subcellular location is the cytoplasm. Peptide chain release factor 1 directs the termination of translation in response to the peptide chain termination codons UAG and UAA. This is Peptide chain release factor 1 from Geotalea uraniireducens (strain Rf4) (Geobacter uraniireducens).